Consider the following 556-residue polypeptide: Membrane protein insertase YidC (556 aa).

A helical membrane pass occupies residues 7-27; it reads ILLVALAVVAYLMVLQWNQDY. Disordered regions lie at residues 35–59 and 126–152; these read ETAQ…GNAN and SSER…PQYS. The segment covering 36-54 has biased composition (low complexity); sequence TAQSQPAAPALPDSPSATT. The next 4 helical transmembrane spans lie at 365-385, 435-455, 468-488, and 513-533; these read LLGN…LAFF, LGGC…YWVL, FWIT…IMGV, and PIIF…YWVV.

This sequence belongs to the OXA1/ALB3/YidC family. Type 1 subfamily. As to quaternary structure, interacts with the Sec translocase complex via SecD. Specifically interacts with transmembrane segments of nascent integral membrane proteins during membrane integration.

Its subcellular location is the cell inner membrane. Required for the insertion and/or proper folding and/or complex formation of integral membrane proteins into the membrane. Involved in integration of membrane proteins that insert both dependently and independently of the Sec translocase complex, as well as at least some lipoproteins. Aids folding of multispanning membrane proteins. In Stutzerimonas stutzeri (strain A1501) (Pseudomonas stutzeri), this protein is Membrane protein insertase YidC.